We begin with the raw amino-acid sequence, 272 residues long: Putative G-protein coupled receptor GPR32P1 (272 aa).

Residues 1 to 24 (MNGVSEGTRGCSDRQPGALTQGHS) are disordered. Topologically, residues 1 to 46 (MNGVSEGTRGCSDRQPGALTQGHSCSRKMNASRCLSEEVGSLRPLT) are extracellular. Asn30 carries N-linked (GlcNAc...) asparagine glycosylation. A helical transmembrane segment spans residues 47–67 (MAVLSASFVVGVLGNGLVPWV). Residues 68–78 (TVFRMARTVST) are Cytoplasmic-facing. Residues 79–99 (VCFFHLALADFMLSLSLPILV) form a helical membrane-spanning segment. The Extracellular portion of the chain corresponds to 100 to 116 (YYIVSRQWLLGEWACKL). Cys114 and Cys191 are disulfide-bonded. Residues 117–137 (YTGFVFLTFSTSNCLLVLISV) traverse the membrane as a helical segment. Residues 138-158 (DRCISVLYPVWALNHRTEQRA) lie on the Cytoplasmic side of the membrane. Residues 159 to 179 (SWLAFGVWLLAAALCSAHLKF) form a helical membrane-spanning segment. Residues 180–213 (RTTRKWNGCMQCYLQFNLENETAQMWTQEVFGRQ) are Extracellular-facing. N-linked (GlcNAc...) asparagine glycosylation occurs at Asn199. A helical transmembrane segment spans residues 214–234 (MAVIMAHFLLGFLGPLAIIGT). The Cytoplasmic segment spans residues 235–272 (CAHLIRAKLLREGWVHANRPKRLLLVLVSALSAGSHLT).

It belongs to the G-protein coupled receptor 1 family.

The protein localises to the cell membrane. Functionally, orphan receptor. In Homo sapiens (Human), this protein is Putative G-protein coupled receptor GPR32P1 (GPR32P1).